A 132-amino-acid chain; its full sequence is ATP synthase epsilon chain (132 aa).

It belongs to the ATPase epsilon chain family. As to quaternary structure, F-type ATPases have 2 components, CF(1) - the catalytic core - and CF(0) - the membrane proton channel. CF(1) has five subunits: alpha(3), beta(3), gamma(1), delta(1), epsilon(1). CF(0) has three main subunits: a, b and c.

The protein resides in the cell inner membrane. Functionally, produces ATP from ADP in the presence of a proton gradient across the membrane. The protein is ATP synthase epsilon chain (atpC) of Aquifex aeolicus (strain VF5).